We begin with the raw amino-acid sequence, 597 residues long: Gigaxonin (597 aa).

Residues 30 to 99 enclose the BTB domain; that stretch reads CDAHLVLDGE…IFSGQIRLNE (70 aa). The region spanning 134 to 236 is the BACK domain; it reads CIGIRDFALH…DSSYLREQML (103 aa). Kelch repeat units lie at residues 274-326, 327-374, 376-421, 422-468, 470-522, and 528-574; these read CIVT…SAEG, FLFV…EIDG, LYIL…AMKK, KIYA…GVAM, LYVF…VYGA, and SIYV…AALR.

As to quaternary structure, interacts with TBCB. Interacts with CUL3. Part of a complex that contains CUL3, RBX1 and GAN. Interacts (via BTB domain) with UBA1. Interacts (via Kelch domains) with MAP1B (via C-terminus) and MAP1S (via C-terminus). Ubiquitinated by E3 ubiquitin ligase complex formed by CUL3 and RBX1 and probably targeted for proteasome-independent degradation. In terms of tissue distribution, expressed in brain, heart and muscle (at protein level).

Its subcellular location is the cytoplasm. It localises to the cytoskeleton. It participates in protein modification; protein ubiquitination. Its function is as follows. Probable cytoskeletal component that directly or indirectly plays an important role in neurofilament architecture. May act as a substrate-specific adapter of an E3 ubiquitin-protein ligase complex which mediates the ubiquitination and subsequent proteasomal degradation of target proteins. Controls degradation of TBCB. Controls degradation of MAP1B and MAP1S, and is critical for neuronal maintenance and survival. The chain is Gigaxonin from Mus musculus (Mouse).